A 324-amino-acid polypeptide reads, in one-letter code: Methenyltetrahydromethanopterin cyclohydrolase (324 aa).

This sequence belongs to the MCH family.

The protein localises to the cytoplasm. It carries out the reaction 5,10-methenyl-5,6,7,8-tetrahydromethanopterin + H2O = N(5)-formyl-5,6,7,8-tetrahydromethanopterin + H(+). The protein operates within one-carbon metabolism; formaldehyde degradation; formate from formaldehyde (H(4)MPT route): step 3/5. Catalyzes the hydrolysis of methenyl-H(4)MPT(+) to 5-formyl-H(4)MPT. The sequence is that of Methenyltetrahydromethanopterin cyclohydrolase from Methylobacterium sp. (strain 4-46).